A 790-amino-acid chain; its full sequence is Ribosome biogenesis protein ERB1 (790 aa).

The interval 1-93 (MAKKNTVTGS…SDELQDDSNS (93 aa)) is disordered. Acidic residues predominate over residues 20–89 (SPEVSESEEI…SEDFSDELQD (70 aa)). The tract at residues 255–371 (RFVPSKHEAK…LRKVPAYQEN (117 aa)) is required for interaction with NOP7. Residues 371-407 (NLRERFERSLDLYLAPRVRHNKLNIDPDSLIPDLPSP) are required for interaction with YTM1. WD repeat units follow at residues 423–462 (GHIG…QVYH), 470–510 (KDDD…YEIE), 574–616 (QCRK…SQSP), 619–657 (KSKG…LTKK), 660–699 (PGAR…TPYK), 703–743 (YHEK…DLMT), and 759–790 (VHSL…LWTT).

This sequence belongs to the WD repeat BOP1/ERB1 family. As to quaternary structure, component of the NOP7 complex, composed of ERB1, NOP7 and YTM1. The complex is held together by ERB1, which interacts with NOP7 via its N-terminal domain and with YTM1 via a high-affinity interaction between the seven-bladed beta-propeller domains of the 2 proteins. The NOP7 complex associates with the 66S pre-ribosome.

The protein localises to the nucleus. It localises to the nucleolus. It is found in the nucleoplasm. Functionally, component of the NOP7 complex, which is required for maturation of the 25S and 5.8S ribosomal RNAs and formation of the 60S ribosome. This is Ribosome biogenesis protein ERB1 from Meyerozyma guilliermondii (strain ATCC 6260 / CBS 566 / DSM 6381 / JCM 1539 / NBRC 10279 / NRRL Y-324) (Yeast).